We begin with the raw amino-acid sequence, 94 residues long: Large ribosomal subunit protein bL28A (94 aa).

Residues 63–94 are disordered; it reads GHRGRRRAARAGSAPAHFARQAGSSLRTAAIL. Residues 72–82 show a composition bias toward low complexity; that stretch reads RAGSAPAHFAR. A compositionally biased stretch (polar residues) spans 84–94; the sequence is AGSSLRTAAIL.

The protein belongs to the bacterial ribosomal protein bL28 family.

The polypeptide is Large ribosomal subunit protein bL28A (rpmB1) (Mycobacterium bovis (strain ATCC BAA-935 / AF2122/97)).